We begin with the raw amino-acid sequence, 241 residues long: Lactate utilization protein C (241 aa).

It belongs to the LutC/YkgG family.

Functionally, is involved in L-lactate degradation and allows cells to grow with lactate as the sole carbon source. The chain is Lactate utilization protein C from Geobacillus sp. (strain WCH70).